A 26-amino-acid polypeptide reads, in one-letter code: U1-poneritoxin-Ni1b (26 aa).

This sequence belongs to the non-disulfide-bridged peptide (NDBP) superfamily. Medium-length antimicrobial peptide (group 3) family. Ponericin-W subfamily. Expressed by the venom gland.

Its subcellular location is the secreted. It localises to the target cell membrane. Its function is as follows. Has a broad spectrum of activity against both Gram-positive and Gram-negative bacteria and S.cerevisiae. Has insecticidal and hemolytic activities. May act by disrupting the integrity of the bacterial cell membrane. The chain is U1-poneritoxin-Ni1b from Neoponera inversa (Ant).